The primary structure comprises 248 residues: MKIIFSPSKEMREENIFENKKIEFTESKFKDKTNILIKILSKKSINEIENIMKLKGELLNNTYKDIQNYDKLKYIPAISMYYGVSFKELELEDYSEKSLKYLKNNLLILSTLYGASLAFDLLKKYRLDMTMSITDKGLYNFWKKDVNDYISNILNKDEILLNLASSEFSKLIDNKKISMINIDFKEEEDGTYKSISIYSKKARGKFLNYLVKNQVSNLEEIIKIELDGYNINKDLSDEKNFIFTRKNS.

This sequence belongs to the UPF0246 family.

This chain is UPF0246 protein FN1762, found in Fusobacterium nucleatum subsp. nucleatum (strain ATCC 25586 / DSM 15643 / BCRC 10681 / CIP 101130 / JCM 8532 / KCTC 2640 / LMG 13131 / VPI 4355).